A 326-amino-acid polypeptide reads, in one-letter code: Phenylalanine--tRNA ligase alpha subunit (326 aa).

Glu251 provides a ligand contact to Mg(2+).

It belongs to the class-II aminoacyl-tRNA synthetase family. Phe-tRNA synthetase alpha subunit type 1 subfamily. In terms of assembly, tetramer of two alpha and two beta subunits. The cofactor is Mg(2+).

It localises to the cytoplasm. It carries out the reaction tRNA(Phe) + L-phenylalanine + ATP = L-phenylalanyl-tRNA(Phe) + AMP + diphosphate + H(+). The chain is Phenylalanine--tRNA ligase alpha subunit from Idiomarina loihiensis (strain ATCC BAA-735 / DSM 15497 / L2-TR).